The primary structure comprises 622 residues: Low affinity potassium transport system protein Kup (622 aa).

The next 12 helical transmembrane spans lie at 9-29 (LPAI…TSPL), 49-69 (VFGF…IKYL), 103-123 (VIMG…TPAI), 137-157 (PQLD…LFMI), 165-185 (VGKL…GLGL), 213-233 (VSFI…ALYA), 247-267 (WFTV…ALLL), 276-296 (PFFL…AALA), 337-357 (IYIP…IVSF), 363-383 (LAAA…ILST), 396-416 (FVAL…TANL), and 419-439 (LLSG…VMTT).

The protein belongs to the HAK/KUP transporter (TC 2.A.72) family.

Its subcellular location is the cell inner membrane. The catalysed reaction is K(+)(in) + H(+)(in) = K(+)(out) + H(+)(out). In terms of biological role, responsible for the low-affinity transport of potassium into the cell. Likely operates as a K(+):H(+) symporter. This Escherichia coli O157:H7 (strain EC4115 / EHEC) protein is Low affinity potassium transport system protein Kup.